Consider the following 463-residue polypeptide: Protein translocase subunit SecY (463 aa).

At 1-20 (MGFMDFLAKMGENLPAVSKP) the chain is on the cytoplasmic side. The helical transmembrane segment at 21–47 (KDKPTLTRKLLWTFIGLIVYLLMASIP) threads the bilayer. Residues 48 to 60 (LYGVTSSNSFLSN) lie on the Extracellular side of the membrane. The segment at residues 61–68 (FLAQQIIF) is an intramembrane region (helical). Residues 61 to 89 (FLAQQIIFASSQGTLAQLGIGPVITSGLI) traverse the membrane as a discontinuously helical segment. The stretch at 69-80 (ASSQGTLAQLGI) is an intramembrane region. The segment at residues 81–89 (GPVITSGLI) is an intramembrane region (helical). The Cytoplasmic segment spans residues 90–110 (MQILVGSKLINVDLTTQEGKS). The helical transmembrane segment at 111–134 (KFTQAEKALALIFIIVESSLFGYV) threads the bilayer. At 135–142 (FTRATSNI) the chain is on the extracellular side. The helical transmembrane segment at 143–167 (LLPIIVVVQLIIASYIILLLDEMIQ) threads the bilayer. At 168 to 174 (KGWGLGS) the chain is on the cytoplasmic side. A helical transmembrane segment spans residues 175–193 (GVSLFIMAGIMKVIFWNMF). Over 194 to 236 (GIVSVQSQNLPVGFFPLLVSYITSGRNLQEIVLNTSSTTPYQP) the chain is Extracellular. A helical membrane pass occupies residues 237–258 (DLIGLIATVGLTILIVYLVNTN). Topologically, residues 259-283 (IYIPVTTQRLRGIRTTVPLNFLYVS) are cytoplasmic. The chain crosses the membrane as a helical span at residues 284 to 305 (SIPVIFVSVLGADIQLFASLAN). Residues 306-341 (SISNSASGILTDIANAFFFPPQGVPHSVYALVVDPV) lie on the Extracellular side of the membrane. A helical transmembrane segment spans residues 342-361 (GAAIYAAVFIVLSIVFGMLW). Residues 362-404 (IDVAGLDPKTQAEQMIRSGIEIPGMRTNPRIIEGILSKYIYAL) lie on the Cytoplasmic side of the membrane. Residues 405–423 (GFFSSLIVGLIAVVATFLG) traverse the membrane as a helical segment. Over 424 to 426 (TYG) the chain is Extracellular. The chain crosses the membrane as a helical span at residues 427–441 (TGVGLLLAITIAMQY). At 442–463 (YNLLAYERTLEMYPLLKRIVGE) the chain is on the cytoplasmic side.

The protein belongs to the SecY/SEC61-alpha family. Component of the Sec protein translocase complex. Heterotrimer consisting of alpha (SecY), beta (SecG) and gamma (SecE) subunits. The heterotrimers can form oligomers, although 1 heterotrimer is thought to be able to translocate proteins. Interacts with the ribosome. May interact with SecDF, and other proteins may be involved.

The protein resides in the cell membrane. In terms of biological role, the central subunit of the protein translocation channel SecYEG. Consists of two halves formed by TMs 1-5 and 6-10. These two domains form a lateral gate at the front which open onto the bilayer between TMs 2 and 7, and are clamped together by SecE at the back. The channel is closed by both a pore ring composed of hydrophobic SecY resides and a short helix (helix 2A) on the extracellular side of the membrane which forms a plug. The plug probably moves laterally to allow the channel to open. The ring and the pore may move independently. The protein is Protein translocase subunit SecY of Sulfolobus acidocaldarius (strain ATCC 33909 / DSM 639 / JCM 8929 / NBRC 15157 / NCIMB 11770).